The chain runs to 230 residues: Heptaprenylglyceryl phosphate synthase (230 aa).

A sn-glycerol 1-phosphate-binding site is contributed by K12. The Mg(2+) site is built by D14 and T40. Sn-glycerol 1-phosphate-binding positions include 159-164 (YIEYSG), G189, and 209-210 (GD).

It belongs to the GGGP/HepGP synthase family. Group I subfamily. In terms of assembly, homodimer. Mg(2+) is required as a cofactor.

It catalyses the reaction sn-glycerol 1-phosphate + all-trans-heptaprenyl diphosphate = 3-heptaprenyl-sn-glycero-1-phosphate + diphosphate. It participates in membrane lipid metabolism; glycerophospholipid metabolism. Prenyltransferase that catalyzes in vivo the transfer of the heptaprenyl moiety of heptaprenyl pyrophosphate (HepPP; 35 carbon atoms) to the C3 hydroxyl of sn-glycerol-1-phosphate (G1P), producing heptaprenylglyceryl phosphate (HepGP). This reaction is an ether-bond-formation step in the biosynthesis of archaea-type G1P-based membrane lipids found in Bacillales. This chain is Heptaprenylglyceryl phosphate synthase, found in Staphylococcus aureus (strain JH1).